Consider the following 84-residue polypeptide: DNA-directed RNA polymerase subunit Rpo5 (84 aa).

It belongs to the archaeal Rpo5/eukaryotic RPB5 RNA polymerase subunit family. As to quaternary structure, part of the 13-subunit RNA polymerase complex.

The protein resides in the cytoplasm. The enzyme catalyses RNA(n) + a ribonucleoside 5'-triphosphate = RNA(n+1) + diphosphate. Its function is as follows. DNA-dependent RNA polymerase (RNAP) catalyzes the transcription of DNA into RNA using the four ribonucleoside triphosphates as substrates. The chain is DNA-directed RNA polymerase subunit Rpo5 from Saccharolobus solfataricus (strain ATCC 35092 / DSM 1617 / JCM 11322 / P2) (Sulfolobus solfataricus).